Reading from the N-terminus, the 376-residue chain is Putative F-box protein At1g53370 (376 aa).

Residues 22–71 enclose the F-box domain; sequence RNYIDSIPVDLLIDILSRFPPKSIARFYCVSKLWESILRGPDFTELYLTK.

This is Putative F-box protein At1g53370 from Arabidopsis thaliana (Mouse-ear cress).